The sequence spans 377 residues: Homoserine O-acetyltransferase (377 aa).

The 300-residue stretch at 48–347 (NVVLIEHALT…PVGHDAFLTE (300 aa)) folds into the AB hydrolase-1 domain. The active-site Nucleophile is S143. Residue R213 coordinates substrate. Catalysis depends on residues D311 and H341. D342 is a binding site for substrate.

The protein belongs to the AB hydrolase superfamily. MetX family. Homodimer.

It localises to the cytoplasm. The catalysed reaction is L-homoserine + acetyl-CoA = O-acetyl-L-homoserine + CoA. The protein operates within amino-acid biosynthesis; L-methionine biosynthesis via de novo pathway; O-acetyl-L-homoserine from L-homoserine: step 1/1. Functionally, transfers an acetyl group from acetyl-CoA to L-homoserine, forming acetyl-L-homoserine. The chain is Homoserine O-acetyltransferase from Corynebacterium efficiens (strain DSM 44549 / YS-314 / AJ 12310 / JCM 11189 / NBRC 100395).